Consider the following 175-residue polypeptide: Inorganic pyrophosphatase (175 aa).

The substrate site is built by Lys30, Arg44, and Tyr56. Mg(2+)-binding residues include Asp66, Asp71, and Asp103. Tyr142 is a substrate binding site.

The protein belongs to the PPase family. As to quaternary structure, homohexamer. Mg(2+) is required as a cofactor.

The protein resides in the cytoplasm. It carries out the reaction diphosphate + H2O = 2 phosphate + H(+). Functionally, catalyzes the hydrolysis of inorganic pyrophosphate (PPi) forming two phosphate ions. The protein is Inorganic pyrophosphatase of Ralstonia nicotianae (strain ATCC BAA-1114 / GMI1000) (Ralstonia solanacearum).